The primary structure comprises 156 residues: Eosinophil cationic protein 2 (156 aa).

Positions 1–25 are cleaved as a signal peptide; that stretch reads MGPKLLESRLCLLLLLGLVLMLASC. H38 (proton acceptor) is an active-site residue. Cystine bridges form between C47–C106, C61–C119, C79–C134, and C86–C94. 62-66 is a binding site for substrate; that stretch reads KGLNT. N89, N96, and N107 each carry an N-linked (GlcNAc...) asparagine glycan. Catalysis depends on H151, which acts as the Proton donor.

This sequence belongs to the pancreatic ribonuclease family.

It is found in the cytoplasmic granule. Functionally, cytotoxin and helminthotoxin with ribonuclease activity. Selectively chemotactic for dendritic cells. Possesses a wide variety of biological activities. This is Eosinophil cationic protein 2 (Ear2) from Mus musculus (Mouse).